Consider the following 434-residue polypeptide: Trigger factor (434 aa).

In terms of domain architecture, PPIase FKBP-type spans 161 to 246 (EDRVTVDFSG…LKKVEERELP (86 aa)).

Belongs to the FKBP-type PPIase family. Tig subfamily.

It localises to the cytoplasm. The catalysed reaction is [protein]-peptidylproline (omega=180) = [protein]-peptidylproline (omega=0). Functionally, involved in protein export. Acts as a chaperone by maintaining the newly synthesized protein in an open conformation. Functions as a peptidyl-prolyl cis-trans isomerase. The sequence is that of Trigger factor from Serratia proteamaculans (strain 568).